We begin with the raw amino-acid sequence, 654 residues long: Beta-mannosyltransferase 2 (654 aa).

Residues Met-1–Asn-37 lie on the Cytoplasmic side of the membrane. Residues Phe-38–Leu-58 traverse the membrane as a helical segment. Residues Ala-59–Ser-654 are Extracellular-facing.

It belongs to the BMT family.

The protein resides in the membrane. Functionally, beta-mannosyltransferase involved in cell wall biosynthesis. Required for the addition of beta-mannose to the acid-labile fraction of cell wall phosphopeptidomannan. This chain is Beta-mannosyltransferase 2 (RHD1), found in Candida albicans (strain SC5314 / ATCC MYA-2876) (Yeast).